A 1375-amino-acid chain; its full sequence is MEAPLQTGMMGTSSHGLATNSSGAKVAERDGFQDVLAPGEGSAGRICGAQPVPFVPQVLGVMIGAGVAVVVTAVLILLVVRRLRVPKTPAPDGPRYRFRKRDKVLFYGRKIMRKVSQSTSSLVDTSVSATSRPRMRKKLKMLNIAKKILRIQKETPTLQRKEPPPAVLEADLTEGDLANSHLPSEVLYMLKNVRVLGHFEKPLFLELCRHMVFQRLGQGDYVFRPGQPDASIYVVQDGLLELCLPGPDGKECVVKEVVPGDSVNSLLSILDVITGHQHPQRTVSARAARDSTVLRLPVEAFSAVFTKYPESLVRVVQIIMVRLQRVTFLALHNYLGLTNELFSHEIQPLRLFPSPGLPTRTSPVRGSKRMVSTSATDEPRETPGRPPDPTGAPLPGPTGDPVKPTSLETPSAPLLSRCVSMPGDISGLQGGPRSDFDMAYERGRISVSLQEEASGGSLAAPARTPTQEPREQPAGACEYSYCEDESATGGCPFGPYQGRQTSSIFEAAKQELAKLMRIEDPSLLNSRVLLHHAKAGTIIARQGDQDVSLHFVLWGCLHVYQRMIDKAEDVCLFVAQPGELVGQLAVLTGEPLIFTLRAQRDCTFLRISKSDFYEIMRAQPSVVLSAAHTVAARMSPFVRQMDFAIDWTAVEAGRALYRQGDRSDCTYIVLNGRLRSVIQRGSGKKELVGEYGRGDLIGVVEALTRQPRATTVHAVRDTELAKLPEGTLGHIKRRYPQVVTRLIHLLSQKILGNLQQLQGPFPAGSGLGVPPHSELTNPASNLATVAILPVCAEVPMVAFTLELQHALQAIGPTLLLNSDIIRARLGASALDSIQEFRLSGWLAQQEDAHRIVLYQTDASLTPWTVRCLRQADCILIVGLGDQEPTLGQLEQMLENTAVRALKQLVLLHREEGAGPTRTVEWLNMRSWCSGHLHLRCPRRLFSRRSPAKLHELYEKVFSRRADRHSDFSRLARVLTGNTIALVLGGGGARGCSHIGVLKALEEAGVPVDLVGGTSIGSFIGALYAEERSASRTKQRAREWAKSMTSVLEPVLDLTYPVTSMFTGSAFNRSIHRVFQDKQIEDLWLPYFNVTTDITASAMRVHKDGSLWRYVRASMTLSGYLPPLCDPKDGHLLMDGGYINNLPADIARSMGAKTVIAIDVGSQDETDLSTYGDSLSGWWLLWKRLNPWADKVKVPDMAEIQSRLAYVSCVRQLEVVKSSSYCEYLRPPIDCFKTMDFGKFDQIYDVGYQYGKAVFGGWSRGNVIEKMLTDRRSTDLNESRRADVLAFPSSGFTDLAEIVSRIEPPTSYVSDGCADGEESDCLTEYEEDAGPDCSRDEGGSPEGASPSTASEMEEEKSILRQRRCLPQEPPGSATDA.

The interval methionine 1–asparagine 20 is disordered. Residues methionine 1–leucine 59 lie on the Lumenal side of the membrane. The segment covering methionine 9–asparagine 20 has biased composition (polar residues). Asparagine 20 carries N-linked (GlcNAc...) asparagine glycosylation. A helical transmembrane segment spans residues glycine 60–valine 80. Residues arginine 81–alanine 1375 lie on the Cytoplasmic side of the membrane. Valine 195–arginine 322 contributes to the a nucleoside 3',5'-cyclic phosphate binding site. 2 disordered regions span residues phenylalanine 352–phenylalanine 436 and leucine 449–glutamine 472. Phosphoserine is present on serine 354. A compositionally biased stretch (polar residues) spans threonine 359–threonine 376. At threonine 361 the chain carries Phosphothreonine. A phosphoserine mark is found at serine 362 and serine 372. Pro residues predominate over residues glycine 384–threonine 398. A Phosphoserine modification is found at serine 420. Residue threonine 464 is modified to Phosphothreonine. A nucleoside 3',5'-cyclic phosphate contacts are provided by residues glutamate 511 to arginine 633 and threonine 629 to lysine 749. Residues leucine 981–arginine 1147 form the PNPLA domain. Residues glycine 985–glycine 990 carry the GXGXXG motif. The GXSXG motif lies at glycine 1012–glycine 1016. Residue serine 1014 is the Nucleophile of the active site. Aspartate 1134 (proton acceptor) is an active-site residue. The short motif at aspartate 1134 to glycine 1136 is the DGA/G element. The tract at residues serine 1306–alanine 1375 is disordered. Residues alanine 1313 to glycine 1329 are compositionally biased toward acidic residues.

This sequence belongs to the NTE family. Post-translationally, glycosylated. In terms of tissue distribution, expressed in brain, placenta, kidney, neuron and skeletal muscle. Expressed in the developing eye, pituitary and brain.

The protein resides in the endoplasmic reticulum membrane. It catalyses the reaction a 1-acyl-sn-glycero-3-phosphocholine + H2O = sn-glycerol 3-phosphocholine + a fatty acid + H(+). It carries out the reaction 1-(9Z-octadecenoyl)-sn-glycero-3-phosphocholine + H2O = sn-glycerol 3-phosphocholine + (9Z)-octadecenoate + H(+). The enzyme catalyses 1-hexadecanoylglycerol + H2O = glycerol + hexadecanoate + H(+). The catalysed reaction is 2-hexadecanoylglycerol + H2O = glycerol + hexadecanoate + H(+). It catalyses the reaction 1-(9Z-octadecenoyl)-glycerol + H2O = glycerol + (9Z)-octadecenoate + H(+). It carries out the reaction 2-(9Z-octadecenoyl)-glycerol + H2O = glycerol + (9Z)-octadecenoate + H(+). The enzyme catalyses 2-(5Z,8Z,11Z,14Z-eicosatetraenoyl)-glycerol + H2O = glycerol + (5Z,8Z,11Z,14Z)-eicosatetraenoate + H(+). The catalysed reaction is 1-hexadecanoyl-sn-glycero-3-phosphate + H2O = sn-glycerol 3-phosphate + hexadecanoate + H(+). It catalyses the reaction 1-hexadecanoyl-sn-glycero-3-phosphocholine + H2O = sn-glycerol 3-phosphocholine + hexadecanoate + H(+). Inhibited by a series a OPs such as mipafox (MPX), phenyl saligenin phosphate (PSP), phenyl dipentyl phosphinate (PDPP), diisopropyl fluorophosphate and paraoxon. In terms of biological role, phospholipase B that deacylates intracellular phosphatidylcholine (PtdCho), generating glycerophosphocholine (GroPtdCho). This deacylation occurs at both sn-2 and sn-1 positions of PtdCho. Catalyzes the hydrolysis of several naturally occurring membrane-associated lipids. Hydrolyzes lysophospholipids and monoacylglycerols, preferring the 1-acyl to the 2-acyl isomer. Does not catalyze hydrolysis of di- or triacylglycerols or fatty acid amides. This Homo sapiens (Human) protein is Patatin-like phospholipase domain-containing protein 6.